The primary structure comprises 152 residues: Histone deacetylase complex subunit SAP18 (152 aa).

Residues 1-38 (MAEAARRQGGGRPLPPPPRGVNQQPPRPKPEPVDREKT) are disordered. The segment covering 28-38 (PKPEPVDREKT) has biased composition (basic and acidic residues).

It belongs to the SAP18 family. Interacts with SIN3, ERF3, ERF4 and HDA19. As to expression, ubiquitous, with low level in flowers.

Its function is as follows. Links the histone deacetylase complex to transcriptional repressors bound to chromatin. Involved in the tethering of the SIN3 complex to core histone proteins. This is Histone deacetylase complex subunit SAP18 from Arabidopsis thaliana (Mouse-ear cress).